The sequence spans 123 residues: Large ribosomal subunit protein bL12 (123 aa).

This sequence belongs to the bacterial ribosomal protein bL12 family. Homodimer. Part of the ribosomal stalk of the 50S ribosomal subunit. Forms a multimeric L10(L12)X complex, where L10 forms an elongated spine to which 2 to 4 L12 dimers bind in a sequential fashion. Binds GTP-bound translation factors.

Its function is as follows. Forms part of the ribosomal stalk which helps the ribosome interact with GTP-bound translation factors. Is thus essential for accurate translation. The protein is Large ribosomal subunit protein bL12 of Bartonella tribocorum (strain CIP 105476 / IBS 506).